The sequence spans 99 residues: Putative septation protein SpoVG (99 aa).

The protein belongs to the SpoVG family.

Functionally, could be involved in septation. This is Putative septation protein SpoVG from Aster yellows witches'-broom phytoplasma (strain AYWB).